The sequence spans 1013 residues: Poly [ADP-ribose] polymerase 1 (1013 aa).

Ala2 is modified (N-acetylalanine). The PARP-type 1 zinc-finger motif lies at 9–93 (YRVEYAKSGR…KVKKTAEAGG (85 aa)). Residues Cys21 and Cys24 each contribute to the Zn(2+) site. Ser41 is modified (phosphoserine). The Zn(2+) site is built by His53 and Cys56. N6-acetyllysine occurs at positions 97 and 105. The PARP-type 2 zinc-finger motif lies at 113–203 (FAAEYAKSNR…VLKKQLPGVK (91 aa)). Residues Cys125 and Cys128 each contribute to the Zn(2+) site. Residue Lys131 is modified to N6-acetyllysine. Positions 159 and 162 each coordinate Zn(2+). Phosphoserine is present on residues Ser177, Ser179, and Ser185. Lys192 is covalently cross-linked (Glycyl lysine isopeptide (Lys-Gly) (interchain with G-Cter in SUMO2)). A disordered region spans residues 198–233 (QLPGVKSEGKRKGDEVDGADEVAKKKSKKGKDKDSK). A Glycyl lysine isopeptide (Lys-Gly) (interchain with G-Cter in SUMO1); alternate cross-link involves residue Lys203. Lys203 participates in a covalent cross-link: Glycyl lysine isopeptide (Lys-Gly) (interchain with G-Cter in SUMO2); alternate. 2 short sequence motifs (nuclear localization signal) span residues 207-209 (KRK) and 221-226 (KKKSKK). The PADR1 zinc-binding domain occupies 225–359 (KKGKDKDSKL…VKKQDRIFPP (135 aa)). Lys249 participates in a covalent cross-link: Glycyl lysine isopeptide (Lys-Gly) (interchain with G-Cter in SUMO2). Phosphoserine occurs at positions 274 and 277. The zinc ribbon stretch occupies residues 290 to 332 (GALLPCKECSGQLVFKSDAYYCTGDVTAWTKCMVKTQTPSRKE). Residues Cys295, Cys298, Cys311, and Cys321 each coordinate Zn(2+). The disordered stretch occupies residues 357-383 (FPPETSAPAPPHLPPSVTSAPTAVNSS). Residues 372-383 (SVTSAPTAVNSS) are compositionally biased toward polar residues. The interval 373 to 523 (VTSAPTAVNS…GVNKSEKRMK (151 aa)) is automodification domain. The region spanning 385-476 (PADKPLSNMK…KSLQELLSAH (92 aa)) is the BRCT domain. Asp387 is subject to PolyADP-ribosyl aspartic acid. PolyADP-ribosyl glutamic acid is present on residues Glu407, Glu413, Glu435, Glu437, Glu444, Glu445, and Glu456. Residue Lys467 forms a Glycyl lysine isopeptide (Lys-Gly) (interchain with G-Cter in SUMO2) linkage. PolyADP-ribosyl glutamic acid occurs at positions 471 and 484. Lys486 is covalently cross-linked (Glycyl lysine isopeptide (Lys-Gly) (interchain with G-Cter in SUMO1); alternate). Lys486 is covalently cross-linked (Glycyl lysine isopeptide (Lys-Gly) (interchain with G-Cter in SUMO2); alternate). Residues Glu488 and Glu491 each carry the polyADP-ribosyl glutamic acid modification. Residues 495–516 (PKGKSAAPSKKSKGLYKEEGVN) form a disordered region. ADP-ribosylserine is present on residues Ser499, Ser503, and Ser506. Lys511 participates in a covalent cross-link: Glycyl lysine isopeptide (Lys-Gly) (interchain with G-Cter in SUMO2). Glu512 and Glu513 each carry polyADP-ribosyl glutamic acid. ADP-ribosylserine is present on Ser518. At Glu519 the chain carries PolyADP-ribosyl glutamic acid. Position 520 is an N6-(ADP-ribosyl)lysine (Lys520). Lys527 participates in a covalent cross-link: Glycyl lysine isopeptide (Lys-Gly) (interchain with G-Cter in SUMO2). The WGR domain maps to 541–637 (SAHVLEKGGK…KNFTKYPKKF (97 aa)). A Phosphothreonine modification is found at Thr593. N6-acetyllysine occurs at positions 599 and 620. A PARP alpha-helical domain is found at 661–778 (KSKLPKAVQE…DIEVAYSLLR (118 aa)). Residue Lys747 forms a Glycyl lysine isopeptide (Lys-Gly) (interchain with G-Cter in SUMO1); alternate linkage. Residue Lys747 forms a Glycyl lysine isopeptide (Lys-Gly) (interchain with G-Cter in SUMO2); alternate linkage. Ser781 and Ser785 each carry phosphoserine. The region spanning 787 to 1013 (DPIDVNYEKL…LKFNFKTSLW (227 aa)) is the PARP catalytic domain. NAD(+) is bound by residues 861–863 (HGS), Gly870, Arg877, and Ser903. The active-site For poly [ADP-ribose] polymerase activity is Glu987.

It belongs to the ARTD/PARP family. As to quaternary structure, homodimer; PARP-type zinc-fingers from separate PARP1 molecules form a dimer module that specifically recognizes DNA strand breaks. Heterodimer; heterodimerizes with PARP2. Interacts (via the PARP catalytic domain) with HPF1. Interacts with NMNAT1. Interacts with nucleosomes; with a preference for nucleosomes containing H2A.X. Interacts with APTX. Component of a base excision repair (BER) complex, containing at least XRCC1, PARP1, PARP2, POLB and LRIG3. Interacts with SRY. The SWAP complex consists of NPM1, NCL, PARP1 and SWAP70. Interacts with TIAM2. Interacts with PARP3; leading to activate PARP1 in absence of DNA. Interacts (when poly-ADP-ribosylated) with CHD1L (via macro domain). Interacts with the DNA polymerase alpha catalytic subunit POLA1; this interaction functions as part of the control of replication fork progression. Interacts with EEF1A1 and TXK. Interacts with RNF4. Interacts with RNF146. Interacts with ZNF423. Interacts with APLF. Interacts with SNAI1 (via zinc fingers); the interaction requires SNAI1 to be poly-ADP-ribosylated and non-phosphorylated (active) by GSK3B. Interacts (when poly-ADP-ribosylated) with PARP9. Interacts with NR4A3; activates PARP1 by improving acetylation of PARP1 and suppressing the interaction between PARP1 and SIRT1. Interacts (via catalytic domain) with PUM3; the interaction inhibits the poly-ADP-ribosylation activity of PARP1 and the degradation of PARP1 by CASP3 following genotoxic stress. Interacts with ZNF365. Interacts with RRP1B. Interacts with TIMELESS; the interaction is direct. Interacts with CGAS; leading to impede the formation of the PARP1-TIMELESS complex. Interacts with KHDC3L, the interaction is increased following the formation of DNA double-strand breaks. Interacts (when auto-poly-ADP-ribosylated) with XRCC1; leading to inhibit PARP1 ADP-ribosyltransferase activity. Interacts with SPINDOC; promoting PARP1 ADP-ribosyltransferase activity. Interacts with BANF1; leading to inhibit PARP1 ADP-ribosyltransferase activity in response to oxidative DNA damage. Interacts (when sumoylated and ubiquitinated) with VCP/p97; leading to its extraction from chromatin. Interacts with YARS1; promoting PARP1 ADP-ribosyltransferase activity. Interacts with PACMP micropeptide; Interacts with PACMP micropeptide; interaction. Interacts (when poly-ADP-ribosylated) with isoform 1 of MACROH2A1; MACROH2A1 specifically binds to poly-ADP-ribose chains and inhibits PARP1 activity, limiting the consumption of nuclear NAD(+). Interacts with CARM1; promoting recruitment to replication forks. Interacts with RECQL. Interacts with ZNF32; the interaction reshapes ZNF432 interacting proteins. Interacts with TPRN; TPRN interacts with a number of DNA damage response proteins, is recruited to sites of DNA damage and may play a role in DNA damage repair. Interacts (when auto-poly-ADP-ribosylated) with AIFM1. Post-translationally, poly-ADP-ribosylated on serine, glutamate and aspartate residues by autocatalysis. Auto-ADP-ribosylation on serine takes place following interaction with HPF1. Auto poly-ADP-ribosylation on serine residues promotes its dissociation from chromatin. Poly-ADP-ribosylated by PARP2; poly-ADP-ribosylation mediates the recruitment of CHD1L to DNA damage sites. Mono-ADP-ribosylated at Lys-520 by SIRT6 in response to oxidative stress, promoting recruitment to double-strand breaks (DSBs) sites. S-nitrosylated, leading to inhibit transcription regulation activity. In terms of processing, phosphorylated at Thr-593 by PRKDC in response to DNA damage following virus infection, promoting its translocation to the cytosol. Phosphorylated by TXK. Post-translationally, proteolytically cleaved by caspase-3 (CASP3) and caspase-7 (CASP7) in response to apoptosis to generate the Poly [ADP-ribose] polymerase 1, processed N-terminus and Poly [ADP-ribose] polymerase 1, processed C-terminus forms. Sumoylated with SUMO1 or SUMO2 by PIAS4 following prolonged residence (trapping) to chromatin. Sumoylation promotes ubiquitination by RNF4 and removal from chromatin by VCP/p97. In terms of processing, ubiquitinated by RNF4 following sumoylation by PIAS4 in response to prolonged residence (trapping) to chromatin. Ubiquitination promotes removal from chromatin by VCP/p97.

It is found in the chromosome. The protein localises to the nucleus. Its subcellular location is the nucleolus. It localises to the cytoplasm. The protein resides in the cytosol. The catalysed reaction is NAD(+) + (ADP-D-ribosyl)n-acceptor = nicotinamide + (ADP-D-ribosyl)n+1-acceptor + H(+).. It catalyses the reaction L-seryl-[protein] + NAD(+) = O-(ADP-D-ribosyl)-L-seryl-[protein] + nicotinamide + H(+). It carries out the reaction L-aspartyl-[protein] + NAD(+) = 4-O-(ADP-D-ribosyl)-L-aspartyl-[protein] + nicotinamide. The enzyme catalyses L-glutamyl-[protein] + NAD(+) = 5-O-(ADP-D-ribosyl)-L-glutamyl-[protein] + nicotinamide. The catalysed reaction is L-tyrosyl-[protein] + NAD(+) = O-(ADP-D-ribosyl)-L-tyrosyl-[protein] + nicotinamide + H(+). It catalyses the reaction L-histidyl-[protein] + NAD(+) = N(tele)-(ADP-D-ribosyl)-L-histidyl-[protein] + nicotinamide + H(+). Its activity is regulated as follows. ADP-ribosyltransferase activity is regulated via an allosteric activation mechanism. In absence of activation signal, PARP1 is autoinhibited by the PARP alpha-helical domain (also named HD region), which prevents effective NAD(+)-binding. Activity is highly stimulated by signals, such as DNA strand breaks. Binding to damaged DNA unfolds the PARP alpha-helical domain, relieving autoinhibition. Poly-ADP-ribosyltransferase activity is tightly regulated and PARP1 is removed from damaged chromatin following initial poly-ADP-ribosylation of chromatin to avoid prolonged residence (trapping) that has cytotoxic consequences. A number of factors (VCP/p97) or post-translational modifications (auto-poly-ADP-ribosylation or ubiquitination) promote PARP1 removal from chromatin. In terms of biological role, poly-ADP-ribosyltransferase that mediates poly-ADP-ribosylation of proteins and plays a key role in DNA repair. Mediates glutamate, aspartate, serine, histidine or tyrosine ADP-ribosylation of proteins: the ADP-D-ribosyl group of NAD(+) is transferred to the acceptor carboxyl group of target residues and further ADP-ribosyl groups are transferred to the 2'-position of the terminal adenosine moiety, building up a polymer with an average chain length of 20-30 units. Serine ADP-ribosylation of proteins constitutes the primary form of ADP-ribosylation of proteins in response to DNA damage. Specificity for the different amino acids is conferred by interacting factors, such as HPF1 and NMNAT1. Following interaction with HPF1, catalyzes serine ADP-ribosylation of target proteins; HPF1 confers serine specificity by completing the PARP1 active site. Also catalyzes tyrosine ADP-ribosylation of target proteins following interaction with HPF1. Following interaction with NMNAT1, catalyzes glutamate and aspartate ADP-ribosylation of target proteins; NMNAT1 confers glutamate and aspartate specificity. PARP1 initiates the repair of DNA breaks: recognizes and binds DNA breaks within chromatin and recruits HPF1, licensing serine ADP-ribosylation of target proteins, such as histones (H2BS6ADPr and H3S10ADPr), thereby promoting decompaction of chromatin and the recruitment of repair factors leading to the reparation of DNA strand breaks. HPF1 initiates serine ADP-ribosylation but restricts the polymerase activity of PARP1 in order to limit the length of poly-ADP-ribose chains. In addition to base excision repair (BER) pathway, also involved in double-strand breaks (DSBs) repair: together with TIMELESS, accumulates at DNA damage sites and promotes homologous recombination repair by mediating poly-ADP-ribosylation. Mediates the poly-ADP-ribosylation of a number of proteins, including itself, APLF, CHFR and NFAT5. In addition to proteins, also able to ADP-ribosylate DNA: catalyzes ADP-ribosylation of DNA strand break termini containing terminal phosphates and a 2'-OH group in single- and double-stranded DNA, respectively. Required for PARP9 and DTX3L recruitment to DNA damage sites. PARP1-dependent PARP9-DTX3L-mediated ubiquitination promotes the rapid and specific recruitment of 53BP1/TP53BP1, UIMC1/RAP80, and BRCA1 to DNA damage sites. PARP1-mediated DNA repair in neurons plays a role in sleep: senses DNA damage in neurons and promotes sleep, facilitating efficient DNA repair. In addition to DNA repair, also involved in other processes, such as transcription regulation, programmed cell death, membrane repair, adipogenesis and innate immunity. Acts as a repressor of transcription: binds to nucleosomes and modulates chromatin structure in a manner similar to histone H1, thereby altering RNA polymerase II. Acts both as a positive and negative regulator of transcription elongation, depending on the context. Acts as a positive regulator of transcription elongation by mediating poly-ADP-ribosylation of NELFE, preventing RNA-binding activity of NELFE and relieving transcription pausing. Acts as a negative regulator of transcription elongation in response to DNA damage by catalyzing poly-ADP-ribosylation of CCNT1, disrupting the phase separation activity of CCNT1 and subsequent activation of CDK9. Involved in replication fork progression following interaction with CARM1: mediates poly-ADP-ribosylation at replication forks, slowing fork progression. Poly-ADP-ribose chains generated by PARP1 also play a role in poly-ADP-ribose-dependent cell death, a process named parthanatos. Also acts as a negative regulator of the cGAS-STING pathway. Acts by mediating poly-ADP-ribosylation of CGAS: PARP1 translocates into the cytosol following phosphorylation by PRKDC and catalyzes poly-ADP-ribosylation and inactivation of CGAS. Acts as a negative regulator of adipogenesis: catalyzes poly-ADP-ribosylation of histone H2B on 'Glu-35' (H2BE35ADPr) following interaction with NMNAT1, inhibiting phosphorylation of H2B at 'Ser-36' (H2BS36ph), thereby blocking expression of pro-adipogenetic genes. Involved in the synthesis of ATP in the nucleus, together with NMNAT1, PARG and NUDT5. Nuclear ATP generation is required for extensive chromatin remodeling events that are energy-consuming. Promotes AIFM1-mediated apoptosis. This form, which translocates into the cytoplasm following cleavage by caspase-3 (CASP3) and caspase-7 (CASP7) in response to apoptosis, is auto-poly-ADP-ribosylated and serves as a poly-ADP-ribose carrier to induce AIFM1-mediated apoptosis. Functionally, this cleavage form irreversibly binds to DNA breaks and interferes with DNA repair, promoting DNA damage-induced apoptosis. The protein is Poly [ADP-ribose] polymerase 1 (PARP1) of Cricetulus griseus (Chinese hamster).